A 267-amino-acid chain; its full sequence is Hydroxyethylthiazole kinase (267 aa).

Methionine 46 is a binding site for substrate. ATP-binding residues include arginine 121 and threonine 167. Alanine 194 provides a ligand contact to substrate.

It belongs to the Thz kinase family. The cofactor is Mg(2+).

The enzyme catalyses 5-(2-hydroxyethyl)-4-methylthiazole + ATP = 4-methyl-5-(2-phosphooxyethyl)-thiazole + ADP + H(+). It functions in the pathway cofactor biosynthesis; thiamine diphosphate biosynthesis; 4-methyl-5-(2-phosphoethyl)-thiazole from 5-(2-hydroxyethyl)-4-methylthiazole: step 1/1. In terms of biological role, catalyzes the phosphorylation of the hydroxyl group of 4-methyl-5-beta-hydroxyethylthiazole (THZ). This is Hydroxyethylthiazole kinase from Rhizobium leguminosarum bv. trifolii (strain WSM2304).